The chain runs to 323 residues: Ribonuclease Z (323 aa).

Residues histidine 62, histidine 64, aspartate 66, histidine 67, histidine 144, aspartate 215, and histidine 273 each contribute to the Zn(2+) site. Aspartate 66 serves as the catalytic Proton acceptor.

It belongs to the RNase Z family. As to quaternary structure, homodimer. Zn(2+) serves as cofactor.

The catalysed reaction is Endonucleolytic cleavage of RNA, removing extra 3' nucleotides from tRNA precursor, generating 3' termini of tRNAs. A 3'-hydroxy group is left at the tRNA terminus and a 5'-phosphoryl group is left at the trailer molecule.. In terms of biological role, zinc phosphodiesterase, which displays some tRNA 3'-processing endonuclease activity. Probably involved in tRNA maturation, by removing a 3'-trailer from precursor tRNA. This is Ribonuclease Z from Synechococcus sp. (strain WH7803).